A 548-amino-acid polypeptide reads, in one-letter code: Chaperonin GroEL (548 aa).

ATP is bound by residues 30–33 (TLGP), Lys51, 87–91 (DGTTT), Gly415, 479–481 (NAA), and Asp495.

This sequence belongs to the chaperonin (HSP60) family. Forms a cylinder of 14 subunits composed of two heptameric rings stacked back-to-back. Interacts with the co-chaperonin GroES.

The protein resides in the cytoplasm. The catalysed reaction is ATP + H2O + a folded polypeptide = ADP + phosphate + an unfolded polypeptide.. Together with its co-chaperonin GroES, plays an essential role in assisting protein folding. The GroEL-GroES system forms a nano-cage that allows encapsulation of the non-native substrate proteins and provides a physical environment optimized to promote and accelerate protein folding. The chain is Chaperonin GroEL from Nitratidesulfovibrio vulgaris (strain DSM 19637 / Miyazaki F) (Desulfovibrio vulgaris).